A 129-amino-acid polypeptide reads, in one-letter code: Phosphoribosyl-AMP cyclohydrolase (129 aa).

Residue Asp-76 coordinates Mg(2+). Residue Cys-77 participates in Zn(2+) binding. Residues Asp-78 and Asp-80 each contribute to the Mg(2+) site. Cys-97 and Cys-104 together coordinate Zn(2+).

It belongs to the PRA-CH family. Homodimer. The cofactor is Mg(2+). Requires Zn(2+) as cofactor.

The protein localises to the cytoplasm. It catalyses the reaction 1-(5-phospho-beta-D-ribosyl)-5'-AMP + H2O = 1-(5-phospho-beta-D-ribosyl)-5-[(5-phospho-beta-D-ribosylamino)methylideneamino]imidazole-4-carboxamide. It participates in amino-acid biosynthesis; L-histidine biosynthesis; L-histidine from 5-phospho-alpha-D-ribose 1-diphosphate: step 3/9. Catalyzes the hydrolysis of the adenine ring of phosphoribosyl-AMP. This chain is Phosphoribosyl-AMP cyclohydrolase, found in Albidiferax ferrireducens (strain ATCC BAA-621 / DSM 15236 / T118) (Rhodoferax ferrireducens).